Reading from the N-terminus, the 362-residue chain is Transcription factor bHLH133 (362 aa).

The region spanning 209-258 (LQVPSSQSTLKVRKEKLGGRIASLHQLVSPFGKTDTASVLSEAIGYIRFL) is the bHLH domain.

This sequence belongs to the bHLH protein family. Homodimer.

It localises to the nucleus. The sequence is that of Transcription factor bHLH133 (BHLH133) from Arabidopsis thaliana (Mouse-ear cress).